A 146-amino-acid chain; its full sequence is Large ribosomal subunit protein uL15 (146 aa).

A disordered region spans residues 1 to 56 (MKLHELRAAEGANKASKRVGRGTGSGLGKTSGRGQNGQNSRSGGGVRPGFEGGQMP). 2 stretches are compositionally biased toward gly residues: residues 21 to 35 (RGTG…GRGQ) and 42 to 52 (SGGGVRPGFEG).

Belongs to the universal ribosomal protein uL15 family. Part of the 50S ribosomal subunit.

Binds to the 23S rRNA. The sequence is that of Large ribosomal subunit protein uL15 from Clostridium botulinum (strain Okra / Type B1).